Here is a 425-residue protein sequence, read N- to C-terminus: High-affinity branched-chain amino acid transport system permease protein LivM (425 aa).

Helical transmembrane passes span 6–26, 45–65, 92–112, 120–140, 145–165, 167–187, 191–211, 260–280, 311–331, 353–373, and 388–408; these read IAMA…FMGV, WQWI…RPMF, FLMA…RGSV, IYII…LLVL, FYAI…LGFW, CLPL…FPVL, GDYL…LLLN, RVIF…FVIN, IKLT…TLFA, IVVL…VLLV, and LMLG…LLPM.

The protein belongs to the binding-protein-dependent transport system permease family. LivHM subfamily.

The protein localises to the cell inner membrane. Its function is as follows. Part of the binding-protein-dependent transport system for branched-chain amino acids. Probably responsible for the translocation of the substrates across the membrane. This is High-affinity branched-chain amino acid transport system permease protein LivM (livM) from Salmonella typhimurium (strain LT2 / SGSC1412 / ATCC 700720).